Consider the following 342-residue polypeptide: S-methyl-5'-thioadenosine phosphorylase (342 aa).

Phosphate contacts are provided by residues Thr51, 99-100, and 132-133; these read RH and SA. Met234 provides a ligand contact to substrate. Ser235 is a binding site for phosphate. Position 258–260 (258–260) interacts with substrate; it reads DYD.

It belongs to the PNP/MTAP phosphorylase family. MTAP subfamily. In terms of assembly, homotrimer.

The protein localises to the cytoplasm. Its subcellular location is the nucleus. The catalysed reaction is S-methyl-5'-thioadenosine + phosphate = 5-(methylsulfanyl)-alpha-D-ribose 1-phosphate + adenine. The protein operates within amino-acid biosynthesis; L-methionine biosynthesis via salvage pathway; S-methyl-5-thio-alpha-D-ribose 1-phosphate from S-methyl-5'-thioadenosine (phosphorylase route): step 1/1. Functionally, catalyzes the reversible phosphorylation of S-methyl-5'-thioadenosine (MTA) to adenine and 5-methylthioribose-1-phosphate. Involved in the breakdown of MTA, a major by-product of polyamine biosynthesis. Responsible for the first step in the methionine salvage pathway after MTA has been generated from S-adenosylmethionine. Has broad substrate specificity with 6-aminopurine nucleosides as preferred substrates. The polypeptide is S-methyl-5'-thioadenosine phosphorylase (Aspergillus fumigatus (strain ATCC MYA-4609 / CBS 101355 / FGSC A1100 / Af293) (Neosartorya fumigata)).